A 90-amino-acid polypeptide reads, in one-letter code: Probable Fe(2+)-trafficking protein (90 aa).

It belongs to the Fe(2+)-trafficking protein family. As to quaternary structure, monomer.

Functionally, could be a mediator in iron transactions between iron acquisition and iron-requiring processes, such as synthesis and/or repair of Fe-S clusters in biosynthetic enzymes. The sequence is that of Probable Fe(2+)-trafficking protein from Hamiltonella defensa subsp. Acyrthosiphon pisum (strain 5AT).